Here is a 664-residue protein sequence, read N- to C-terminus: Macoilin-1 (664 aa).

4 helical membrane-spanning segments follow: residues 28-48 (TFLYLKFLVVWALVLLADFVL), 75-95 (AFSVFFVCVAFTSDIICLLFI), 120-140 (VCLPTVSLWILFVYIEAAIRF), and 154-174 (FAAHCIGYPVVTLGFGFKSYV). Residues 206–225 (QMLQRQERETEEATSKGMSE) form a disordered region. Residues 210-219 (RQERETEEAT) are compositionally biased toward basic and acidic residues. N-linked (GlcNAc...) asparagine glycosylation is found at Asn234, Asn336, Asn339, Asn348, and Asn655. 2 disordered regions span residues 315-364 (VGAG…LAPH) and 644-664 (FMDTSPSSLDPNASVYQPLKK). A compositionally biased stretch (low complexity) spans 334–348 (SHNSTNGSVPSSSSN). The span at 644–658 (FMDTSPSSLDPNASV) shows a compositional bias: polar residues.

This sequence belongs to the macoilin family.

The protein resides in the nucleus membrane. Its subcellular location is the rough endoplasmic reticulum membrane. May play a role in the regulation of neuronal activity. The polypeptide is Macoilin-1 (Danio rerio (Zebrafish)).